The following is a 1316-amino-acid chain: MLDVNFFDELRIGLATAEDIRQWSYGEVKKPETINYRTLKPEKDGLFCEKIFGPTRDWECYCGKYKRVPFKGIICERCGVEVTRAKVRRERMGHIELAAPVTHIWYFKGVPSRLGYLLDLAPKDLEKIIYFAAYVITSVDEEMRHNELSTLEAEMAVERKAVEDQRDGELEARAQKLEADLAELEAEGAKADARRKVRDGGEREMRQIRDRAQRELDRLEDIWSTFTKLAPKQLIVDENLYRELVDRYGEYFTGAMGAESIQKLIENFDIDAEAESLRDVIRNGKGQKKLRALKRLKVVAAFQQSGNSPMGMVLDAVPVIPPELRPMVQLDGGRFATSDLNDLYRRVINRNNRLKRLIDLGAPEIIVNNEKRMLQESVDALFDNGRRGRPVTGPGNRPLKSLSDLLKGKQGRFRQNLLGKRVDYSGRSVIVVGPQLKLHQCGLPKLMALELFKPFVMKRLVDLNHAQNIKSAKRMVERQRPQVWDVLEEVIAEHPVLLNRAPTLHRLGIQAFEPMLVEGKAIQLHPLVCEAFNADFDGDQMAVHLPLSAEAQAEARILMLSSNNILSPASGRPLAMPRLDMVTGLYYLTTEVPGDTGEYQPASGDHPETGVYSSPAEAIMAADRGVLSVRAKIKVRLTQLRPPVEIEAELFGHSGWQPGDAWMAETTLGRVMFNELLPLGYPFVNKQMHKKVQAAIINDLAERYPMIVVAQTVDKLKDAGFYWATRSGVTVSMADVLVPPRKKEILDHYEERADKVEKQFQRGALNHDERNEALVEIWKEATDEVGQALREHYPDDNPIITIVDSGATGNFTQTRTLAGMKGLVTNPKGEFIPRPVKSSFREGLTVLEYFINTHGARKGLADTALRTADSGYLTRRLVDVSQDVIVREHDCQTERGIVVELAERAPDGTLIRDPYIETSAYARTLGTDAVDEAGNVIVERGQDLGDPEIDALLAAGITQVKVRSVLTCATSTGVCATCYGRSMATGKLVDIGEAVGIVAAQSIGEPGTQLTMRTFHQGGVGEDITGGLPRVQELFEARVPRGKAPIADVTGRVRLEDGERFYKITIVPDDGGEEVVYDKISKRQRLRVFKHEDGSERVLSDGDHVEVGQQLMEGSADPHEVLRVQGPREVQIHLVREVQEVYRAQGVSIHDKHIEVIVRQMLRRVTIIDSGSTEFLPGSLIDRAEFEAENRRVVAEGGEPAAGRPVLMGITKASLATDSWLSAASFQETTRVLTDAAINCRSDKLNGLKENVIIGKLIPAGTGINRYRNIAVQPTEEARAAAYTIPSYEDQYYSPDFGAATGAAVPLDDYGYSDYR.

Positions 60, 62, 75, and 78 each coordinate Zn(2+). 3 residues coordinate Mg(2+): D535, D537, and D539. Zn(2+)-binding residues include C891, C968, C975, and C978.

The protein belongs to the RNA polymerase beta' chain family. The RNAP catalytic core consists of 2 alpha, 1 beta, 1 beta' and 1 omega subunit. When a sigma factor is associated with the core the holoenzyme is formed, which can initiate transcription. The cofactor is Mg(2+). Requires Zn(2+) as cofactor.

It catalyses the reaction RNA(n) + a ribonucleoside 5'-triphosphate = RNA(n+1) + diphosphate. In terms of biological role, DNA-dependent RNA polymerase catalyzes the transcription of DNA into RNA using the four ribonucleoside triphosphates as substrates. The polypeptide is DNA-directed RNA polymerase subunit beta' (Mycobacterium bovis (strain BCG / Pasteur 1173P2)).